The chain runs to 141 residues: Ly6/PLAUR domain-containing protein 1 (141 aa).

Residues Met-1–Ala-20 form the signal peptide. 6 disulfide bridges follow: Cys-25–Cys-54, Cys-28–Cys-37, Cys-46–Cys-71, Cys-77–Cys-100, Cys-88–Cys-97, and Cys-101–Cys-106. The region spanning Cys-25–Asn-107 is the UPAR/Ly6 domain. Asn-45 carries an N-linked (GlcNAc...) asparagine glycan. Ser-117 carries GPI-anchor amidated serine lipidation. Positions Ala-118–Cys-141 are cleaved as a propeptide — removed in mature form.

In terms of assembly, interacts with CHRNA4 and nAChRs containing alpha-4:beta-2 (CHRNA4:CHRNB2) and alpha-7 (CHRNA7) subunits.

It localises to the cell membrane. Its function is as follows. Believed to act as a modulator of nicotinic acetylcholine receptors (nAChRs) activity. In vitro increases receptor desensitization and decreases affinity for ACh of alpha-4:beta-2-containing nAChRs. May play a role in the intracellular trafficking of alpha-4:beta-2 and alpha-7-containing nAChRs and may inhibit their expression at the cell surface. May be involved in the control of anxiety. This chain is Ly6/PLAUR domain-containing protein 1 (LYPD1), found in Homo sapiens (Human).